The primary structure comprises 596 residues: Chaperonin 60 subunit beta 2, chloroplastic (596 aa).

A chloroplast-targeting transit peptide spans 1 to 50 (MASTFTATSSLGSLLAPNAIKLSSATSISSSSFGRRHNVCVRRSRPAIVC). Phosphoserine is present on residues S97 and S474. Residues 388 to 489 (TQEAVNKRVV…KDTLENDEEK (102 aa)) are a coiled coil.

This sequence belongs to the chaperonin (HSP60) family. In terms of assembly, part of the Cpn60 complex composed of 7 alpha and 7 beta subunits. Can also form a complex composed of 14 beta subunits only. Both complexes show ATPase activity. The Cpn60 complex interacts with the Cpn10 complex. Interacts with RAB during heat stress.

It is found in the plastid. The protein localises to the chloroplast stroma. Involved in protein assisted folding. The polypeptide is Chaperonin 60 subunit beta 2, chloroplastic (CPN60B2) (Arabidopsis thaliana (Mouse-ear cress)).